The following is a 152-amino-acid chain: MMDNKDYKKFYLIREDVLPESVVKTLKIKDALKSDPTLSIYDAVKQFDLSRSAFYKYRETIFPVDDKMLDHREFTLILYVTDIVGMLARVLDVISKLELSVLTIHQSIPMEEKATITLSLNAKSKETSVEDVIGALRNLDYVSKVELISMSM.

Residues 75–150 (TLILYVTDIV…YVSKVELISM (76 aa)) form the ACT domain.

Belongs to the UPF0735 family.

This chain is UPF0735 ACT domain-containing protein SAS1579, found in Staphylococcus aureus (strain MSSA476).